The following is a 230-amino-acid chain: Cytidylate kinase (230 aa).

Gly-12–Thr-20 serves as a coordination point for ATP.

It belongs to the cytidylate kinase family. Type 1 subfamily.

The protein resides in the cytoplasm. It catalyses the reaction CMP + ATP = CDP + ADP. The catalysed reaction is dCMP + ATP = dCDP + ADP. The protein is Cytidylate kinase of Shewanella oneidensis (strain ATCC 700550 / JCM 31522 / CIP 106686 / LMG 19005 / NCIMB 14063 / MR-1).